Here is a 234-residue protein sequence, read N- to C-terminus: Probable porphobilinogen deaminase (234 aa).

This sequence belongs to the HMBS family.

It carries out the reaction 4 porphobilinogen + H2O = hydroxymethylbilane + 4 NH4(+). It participates in porphyrin-containing compound metabolism; protoporphyrin-IX biosynthesis; coproporphyrinogen-III from 5-aminolevulinate: step 2/4. Functionally, tetrapolymerization of the monopyrrole PBG into the hydroxymethylbilane pre-uroporphyrinogen in several discrete steps. This Chlamydia pneumoniae (Chlamydophila pneumoniae) protein is Probable porphobilinogen deaminase (hemC).